A 235-amino-acid chain; its full sequence is Octanoyltransferase (235 aa).

The region spanning 52–229 is the BPL/LPL catalytic domain; it reads KNRQASMIFC…SICSALEYIN (178 aa). Residues 89-96, 159-161, and 172-174 each bind substrate; these read RGGKITWH, AIG, and GFA. The active-site Acyl-thioester intermediate is cysteine 190.

Belongs to the LipB family.

It is found in the cytoplasm. The enzyme catalyses octanoyl-[ACP] + L-lysyl-[protein] = N(6)-octanoyl-L-lysyl-[protein] + holo-[ACP] + H(+). The protein operates within protein modification; protein lipoylation via endogenous pathway; protein N(6)-(lipoyl)lysine from octanoyl-[acyl-carrier-protein]: step 1/2. Its function is as follows. Catalyzes the transfer of endogenously produced octanoic acid from octanoyl-acyl-carrier-protein onto the lipoyl domains of lipoate-dependent enzymes. Lipoyl-ACP can also act as a substrate although octanoyl-ACP is likely to be the physiological substrate. The chain is Octanoyltransferase from Tropheryma whipplei (strain Twist) (Whipple's bacillus).